A 487-amino-acid polypeptide reads, in one-letter code: Betaine aldehyde dehydrogenase (487 aa).

The K(+) site is built by Ile-27 and Asp-93. NAD(+) is bound at residue 149–151 (GAW). Catalysis depends on Lys-161, which acts as the Charge relay system. Residues 175–178 (KPSE) and 228–231 (SVPT) each bind NAD(+). Leu-243 is a binding site for K(+). Glu-249 (proton acceptor) is an active-site residue. Residues Gly-251, Cys-283, and Glu-384 each coordinate NAD(+). Cys-283 serves as the catalytic Nucleophile. Cys-283 carries the post-translational modification Cysteine sulfenic acid (-SOH). Positions 454 and 457 each coordinate K(+). Glu-461 functions as the Charge relay system in the catalytic mechanism.

The protein belongs to the aldehyde dehydrogenase family. Dimer of dimers. K(+) is required as a cofactor.

The enzyme catalyses betaine aldehyde + NAD(+) + H2O = glycine betaine + NADH + 2 H(+). It participates in amine and polyamine biosynthesis; betaine biosynthesis via choline pathway; betaine from betaine aldehyde: step 1/1. Functionally, involved in the biosynthesis of the osmoprotectant glycine betaine. Catalyzes the irreversible oxidation of betaine aldehyde to the corresponding acid. The polypeptide is Betaine aldehyde dehydrogenase (Brucella canis (strain ATCC 23365 / NCTC 10854 / RM-666)).